The primary structure comprises 86 residues: uncharacterized protein (86 aa).

The protein localises to the mitochondrion. This is an uncharacterized protein from Marchantia polymorpha (Common liverwort).